A 704-amino-acid polypeptide reads, in one-letter code: MTDTVFSSSSSRWMCPSDRPLQSNDKEQLQTGWSVHPSGQPDRQRKQEELTDEEKEIINRVIARAEKMEEMEQERIGRLVDRLENMRKNVAGDGVNRCILCGEQLGMLGSACVVCEDCKKNVCTKCGVETSNNRPHPVWLCKICIEQREVWKRSGAWFFKGFPKQVLPQPMPIKKNKPQQPVSEPVPAAPEPATPEPKHPARAPTRGDTEDRRGPGQKTGPDMTSAPGRGSYGPPVRRASEARMSSSGRDSDSWDQGHGMAAGDPSQSPAGLRRANSVQASRPAPASMQSPAPPQPGQPGPPGGSRPSPGPTGRFPDQRPEVAPSDPDYTGAAAQPREERTGGIGGYSAAGTREDRAGHPPGSYTQASAAAPQPVVASARQPPPPEEDEEEANSYDSDEATTLGALEFSLLYDQDNSSLHCTIIKAKGLKPMDSNGLADPYVKLHLLPGASKSNKLRTKTLRNTRNPIWNETLVYHGITDEDMQRKTLRISVCDEDKFGHNEFIGETRFSLKKLKPNQRKNFNICLERVIPMKRAGTTGSARGMALYEEEQVERIGDIEERGKILVSLMYSTQQGGLIVGIIRCVHLAAMDANGYSDPFVKLWLKPDMGKKAKHKTQIKKKTLNPEFNEEFFYDIKHSDLAKKSLDISVWDYDIGKSNDYIGGCQLGISAKGERLKHWYECLKNKDKKIERWHQLQNENHVSSD.

Residues 1–12 are compositionally biased toward polar residues; it reads MTDTVFSSSSSR. Positions 1-52 are disordered; sequence MTDTVFSSSSSRWMCPSDRPLQSNDKEQLQTGWSVHPSGQPDRQRKQEELTD. Residues 44–161 enclose the RabBD domain; the sequence is QRKQEELTDE…KRSGAWFFKG (118 aa). The FYVE-type zinc-finger motif lies at 92-149; it reads GDGVNRCILCGEQLGMLGSACVVCEDCKKNVCTKCGVETSNNRPHPVWLCKICIEQRE. Zn(2+) is bound by residues C98, C101, C115, C118, C123, C126, C141, and C144. The segment at 167-398 is disordered; the sequence is LPQPMPIKKN…EEEANSYDSD (232 aa). Over residues 205–214 the composition is skewed to basic and acidic residues; the sequence is TRGDTEDRRG. R229 carries the post-translational modification Omega-N-methylarginine. S277 bears the Phosphoserine mark. Residues 279-290 show a composition bias toward low complexity; that stretch reads QASRPAPASMQS. Over residues 291 to 310 the composition is skewed to pro residues; the sequence is PAPPQPGQPGPPGGSRPSPG. Low complexity predominate over residues 366–380; the sequence is QASAAAPQPVVASAR. Over residues 385-398 the composition is skewed to acidic residues; the sequence is PEEDEEEANSYDSD. In terms of domain architecture, C2 1 spans 402–524; the sequence is TLGALEFSLL…KPNQRKNFNI (123 aa). Residues M432, D433, D439, D494, E495, D496, E502, E549, D591, D597, D651, Y652, D653, and D659 each contribute to the Ca(2+) site. In terms of domain architecture, C2 2 spans 560 to 693; that stretch reads ERGKILVSLM…NKDKKIERWH (134 aa). Residues S702 and S703 each carry the phosphoserine modification.

As to quaternary structure, interacts with RAB3B, RAB3C, RAB3D, RAB8A, RAB27A and RAB27B. Interacts with RAB3A; this interaction recruits RPH3A to synaptic vesicules. Interacts (via C2B domain) with SNAP25. Interacts with deubiquitinating enzyme CAND1; this interaction results in the deubiquitination of RPH3A. Interacts with GRIN2A and DLG4; this ternary complex regulates NMDA receptor composition at postsynaptic membranes. Interacts with SNCA. Requires Ca(2+) as cofactor. Post-translationally, ubiquitinated. Deubiquitinated by CAND1 to prevent its degradation. Specifically expressed in brain.

The protein resides in the cytoplasmic vesicle. The protein localises to the secretory vesicle. Its subcellular location is the synaptic vesicle membrane. It is found in the cell projection. It localises to the dendritic spine. The protein resides in the postsynaptic cell membrane. The protein localises to the membrane. Plays an essential role in docking and fusion steps of regulated exocytosis. At the presynaptic level, RPH3A is recruited by RAB3A to the synaptic vesicle membrane in a GTP-dependent manner where it modulates synaptic vesicle trafficking and calcium-triggered neurotransmitter release. In the post-synaptic compartment, forms a ternary complex with GRIN2A and DLG4 and regulates NMDA receptor stability. Also plays a role in the exocytosis of arginine vasopressin hormone. This is Rabphilin-3A (RPH3A) from Bos taurus (Bovine).